The chain runs to 283 residues: Putative aquaporin NIP4-1 (283 aa).

The residue at position 1 (methionine 1) is an N-acetylmethionine. 2 helical membrane-spanning segments follow: residues 45 to 65 (LIAEMIGTYFIVFSGCGVVVV) and 70 to 90 (GGTITFPGICVTWGLIVMVMI). Residues 102 to 104 (NPA) carry the NPA 1 motif. Transmembrane regions (helical) follow at residues 122–142 (LYIGAQFAGSLLASLTLRLMF), 161–181 (ALVAEIIISFLLMFVISGVAT), and 189–209 (LAGIAVGMTIMVNVFVAGPIS). An NPA 2 motif is present at residues 214 to 216 (NPA). Residues 231 to 251 (IWVYIVGPVLGVISGGFVYNL) form a helical membrane-spanning segment. Position 267 is a phosphoserine (serine 267).

Belongs to the MIP/aquaporin (TC 1.A.8) family. NIP (TC 1.A.8.12) subfamily.

Its subcellular location is the membrane. Potential aquaporin, which may facilitate the transport of water and small neutral solutes across cell membranes. The chain is Putative aquaporin NIP4-1 (NIP4-1) from Arabidopsis thaliana (Mouse-ear cress).